Here is a 58-residue protein sequence, read N- to C-terminus: MSKVVVRKNESLDDALRRFKRSVTKAGTLQEARKREHYEKPSVKRKRKSEAARKRKKI.

The tract at residues 25–58 (KAGTLQEARKREHYEKPSVKRKRKSEAARKRKKI) is disordered. Positions 31–42 (EARKREHYEKPS) are enriched in basic and acidic residues. Over residues 43–58 (VKRKRKSEAARKRKKI) the composition is skewed to basic residues.

It belongs to the bacterial ribosomal protein bS21 family.

The polypeptide is Small ribosomal subunit protein bS21 (Streptococcus thermophilus (strain ATCC BAA-491 / LMD-9)).